Reading from the N-terminus, the 77-residue chain is Translation initiation factor IF-1, chloroplastic (77 aa).

An S1-like domain is found at 1-71; sequence MKEQKLIHEG…TKGRIIYRLR (71 aa).

This sequence belongs to the IF-1 family. Component of the 30S ribosomal translation pre-initiation complex which assembles on the 30S ribosome in the order IF-2 and IF-3, IF-1 and N-formylmethionyl-tRNA(fMet); mRNA recruitment can occur at any time during PIC assembly.

The protein localises to the plastid. The protein resides in the chloroplast. Its function is as follows. One of the essential components for the initiation of protein synthesis. Stabilizes the binding of IF-2 and IF-3 on the 30S subunit to which N-formylmethionyl-tRNA(fMet) subsequently binds. Helps modulate mRNA selection, yielding the 30S pre-initiation complex (PIC). Upon addition of the 50S ribosomal subunit IF-1, IF-2 and IF-3 are released leaving the mature 70S translation initiation complex. The protein is Translation initiation factor IF-1, chloroplastic of Dioscorea elephantipes (Elephant's foot yam).